Here is a 232-residue protein sequence, read N- to C-terminus: Large ribosomal subunit protein uL1 (232 aa).

Belongs to the universal ribosomal protein uL1 family. Part of the 50S ribosomal subunit.

Binds directly to 23S rRNA. The L1 stalk is quite mobile in the ribosome, and is involved in E site tRNA release. In terms of biological role, protein L1 is also a translational repressor protein, it controls the translation of the L11 operon by binding to its mRNA. This chain is Large ribosomal subunit protein uL1, found in Coxiella burnetii (strain CbuK_Q154) (Coxiella burnetii (strain Q154)).